We begin with the raw amino-acid sequence, 366 residues long: Chorismate synthase (366 aa).

Position 48 (arginine 48) interacts with NADP(+). Residues 125 to 127, 238 to 239, glycine 278, 293 to 297, and arginine 319 contribute to the FMN site; these read RSS, NA, and KPTSS.

This sequence belongs to the chorismate synthase family. In terms of assembly, homotetramer. FMNH2 serves as cofactor.

It carries out the reaction 5-O-(1-carboxyvinyl)-3-phosphoshikimate = chorismate + phosphate. The protein operates within metabolic intermediate biosynthesis; chorismate biosynthesis; chorismate from D-erythrose 4-phosphate and phosphoenolpyruvate: step 7/7. In terms of biological role, catalyzes the anti-1,4-elimination of the C-3 phosphate and the C-6 proR hydrogen from 5-enolpyruvylshikimate-3-phosphate (EPSP) to yield chorismate, which is the branch point compound that serves as the starting substrate for the three terminal pathways of aromatic amino acid biosynthesis. This reaction introduces a second double bond into the aromatic ring system. In Hydrogenovibrio crunogenus (strain DSM 25203 / XCL-2) (Thiomicrospira crunogena), this protein is Chorismate synthase.